Reading from the N-terminus, the 217-residue chain is Probable transaldolase (217 aa).

Lys83 serves as the catalytic Schiff-base intermediate with substrate.

It belongs to the transaldolase family. Type 3B subfamily.

It localises to the cytoplasm. It carries out the reaction D-sedoheptulose 7-phosphate + D-glyceraldehyde 3-phosphate = D-erythrose 4-phosphate + beta-D-fructose 6-phosphate. It functions in the pathway carbohydrate degradation; pentose phosphate pathway; D-glyceraldehyde 3-phosphate and beta-D-fructose 6-phosphate from D-ribose 5-phosphate and D-xylulose 5-phosphate (non-oxidative stage): step 2/3. Functionally, transaldolase is important for the balance of metabolites in the pentose-phosphate pathway. This is Probable transaldolase from Brucella abortus (strain S19).